Here is a 148-residue protein sequence, read N- to C-terminus: Antitoxin Xre (148 aa).

Belongs to the MbcA/ParS/Xre antitoxin family. Homodimer. Forms a complex with cognate toxin Rse.

Its function is as follows. Antitoxin component of a type II toxin-antitoxin (TA) system. Neutralizes the NAD(+) depleting activity of cognate toxin Res. In Photorhabdus laumondii subsp. laumondii (strain DSM 15139 / CIP 105565 / TT01) (Photorhabdus luminescens subsp. laumondii), this protein is Antitoxin Xre.